The sequence spans 1064 residues: MIFNASQDSKTEIEYQTISSTQTYLAEEQSERLHNLISKEQLEKLNQAFNERPDSQVGFDDLRGLLLEQDITFNDAVYNRLFLKINQNRDFMVDWNEFVSYLIFGFQEEDPSSQKESLILPISVAPSVRKTEHRSTVCCVALLKAKSDQVPIEEVTETVNFSFGGEDSPEASGMWVTASHEGMLRFWTSHMEPIRTATSESSKPHAVYCMSYAFYNNGKVHSKLVLGDYAGNVRILSYSPNLRGPFQAKPGAALIEVVWADVLKGKIPQMIPKEYINLHNEMISCVHYSLHMNALFATAEYRNTKKYRGRCPGMIMVTYDERSNFRVPLGVSTFFVAESHNIVVTGGPDTFVRIWDVYIPTEPSAILTGHNGGIVMVFVQPEENKVYSVDYQKIIKVWDLQEHTLLQTYGELVRLIHPSETDMTYFYHSHLRELIVAGRKLISIKCCPRVRVDLTDGNTHAAPVSVVLYNRLFRNIVTCGLDSYIIVWDPWSGRRKIIMKNCHTKMIYGEIIDIEITAATFDPLEQFLLTGARDGTLKIWNYNNAVVVRNMSIMPDQEVTSVIWVVDRILAMGWDRQVTEFNDVEGREYGDPKKWSKFHTDDITCADVKLGEGVVTATYSGEVIFWKLETGQPYRRYSVMDPTRFIELKLTPEEEKLMRRSKRLMSRLGSSRMSRATAITMPKADDGRDYGQNVPISVQAVLFLQTRPQTIQHGSVFISLDTGYIQKVYSHHSRGGYMSQFLSVHKTGDCVLTMCTDRKNRYIYTGTAFGYIKVWHIVNYPEAEKVHVCMPRLRLEFIFMRKEFWVTRAKRVVRHQREPLLVSSYKAHLKAINSIAFINLPKIVFRGSHDYSCRLWTQGGRYLGTLGTVLPWSKLSPFERAGSENQVYRLPPDIKKVASSTTLKVISGVQMDRPAKRAEVKAPEDRDEETAQTDDGYDLKKIFDKPLKEPILGKHFTLPGKSVMDQRIDVDTTQSYIAVYTHLKVHHTEMLERLPTPAVISRVAGENYMDHYVPVEGKVDLSGSALNIKQPPRRNVRPNDPRNMRMAKTRGDMGPGPSPSQQSE.

8 WD repeats span residues 153–197 (EEVT…IRTA), 326–365 (RVPL…EPSA), 369–408 (GHNG…LLQT), 459–498 (THAA…RKII), 511–550 (IIDI…VVRN), 598–638 (FHTD…RRYS), 746–785 (KTGD…EAEK), and 827–866 (AHLK…LGTL). Over residues 914-924 (PAKRAEVKAPE) the composition is skewed to basic and acidic residues. 2 disordered regions span residues 914 to 935 (PAKR…QTDD) and 1023 to 1064 (GSAL…QQSE). Residues 925–935 (DRDEETAQTDD) show a composition bias toward acidic residues.

The polypeptide is WD repeat-containing protein on Y chromosome (Drosophila pseudoobscura pseudoobscura (Fruit fly)).